Consider the following 142-residue polypeptide: Large ribosomal subunit protein uL11 (142 aa).

Belongs to the universal ribosomal protein uL11 family. Part of the ribosomal stalk of the 50S ribosomal subunit. Interacts with L10 and the large rRNA to form the base of the stalk. L10 forms an elongated spine to which L12 dimers bind in a sequential fashion forming a multimeric L10(L12)X complex. Post-translationally, one or more lysine residues are methylated.

Forms part of the ribosomal stalk which helps the ribosome interact with GTP-bound translation factors. The sequence is that of Large ribosomal subunit protein uL11 from Shigella boydii serotype 4 (strain Sb227).